Consider the following 116-residue polypeptide: Non-specific lipid-transfer protein C, cotyledon-specific isoform (116 aa).

The signal sequence occupies residues 1-24 (MKNVVFSVLLLLSFLFCLANTNEA). 4 disulfides stabilise this stretch: cysteine 28–cysteine 76, cysteine 38–cysteine 53, cysteine 54–cysteine 98, and cysteine 74–cysteine 112.

This sequence belongs to the plant LTP family.

Plant non-specific lipid-transfer proteins transfer phospholipids as well as galactolipids across membranes. May play a role in wax or cutin deposition in the cell walls of expanding epidermal cells and certain secretory tissues. The chain is Non-specific lipid-transfer protein C, cotyledon-specific isoform from Ricinus communis (Castor bean).